The chain runs to 646 residues: Chaperone protein DnaK (646 aa).

Position 198 is a phosphothreonine; by autocatalysis (T198). Residues E603–K646 are disordered. The span at A618–Q627 shows a compositional bias: low complexity.

The protein belongs to the heat shock protein 70 family.

In terms of biological role, acts as a chaperone. The sequence is that of Chaperone protein DnaK from Acinetobacter baumannii (strain ACICU).